A 98-amino-acid polypeptide reads, in one-letter code: NADH-ubiquinone oxidoreductase chain 4L (98 aa).

Helical transmembrane passes span 1–21, 29–49, and 58–78; these read MTPVHFSFTSAFILGLMGLAF, ALLCLEGMMLSLFIALSLWAL, and VAPMLLLAFSACEASAGLALL.

The protein belongs to the complex I subunit 4L family.

It is found in the mitochondrion membrane. The enzyme catalyses a ubiquinone + NADH + 5 H(+)(in) = a ubiquinol + NAD(+) + 4 H(+)(out). Core subunit of the mitochondrial membrane respiratory chain NADH dehydrogenase (Complex I) which catalyzes electron transfer from NADH through the respiratory chain, using ubiquinone as an electron acceptor. Part of the enzyme membrane arm which is embedded in the lipid bilayer and involved in proton translocation. The polypeptide is NADH-ubiquinone oxidoreductase chain 4L (MT-ND4L) (Oncorhynchus clarkii (Cutthroat trout)).